Consider the following 331-residue polypeptide: Phenylalanine--tRNA ligase alpha subunit (331 aa).

Residue Glu-252 participates in Mg(2+) binding.

Belongs to the class-II aminoacyl-tRNA synthetase family. Phe-tRNA synthetase alpha subunit type 1 subfamily. Tetramer of two alpha and two beta subunits. Mg(2+) is required as a cofactor.

The protein localises to the cytoplasm. The enzyme catalyses tRNA(Phe) + L-phenylalanine + ATP = L-phenylalanyl-tRNA(Phe) + AMP + diphosphate + H(+). This is Phenylalanine--tRNA ligase alpha subunit from Xanthomonas axonopodis pv. citri (strain 306).